Consider the following 472-residue polypeptide: MLVLSSSAPPVLEVCKDRVSSSFSTSSSSSSSAFSAVVFRRSFFTRFNSSLICCCSSKLKLMADTALPSSSSSTSASASYSAAAKSVEEENHEIPVKKEDDNQLLRSRTYRNVRSAEELISEIKRESEIGRLPKSVAYAMEGLFHYYRNAVLSSGISHADEIVLSNMSVMLDFVLLDIEDPFVFPPFHKAIREPADYYSFGQDYIRPLVDFGNSYVGNIAIFQEMEEKLKQGDNIILMSNHQSEADPAVIALLLEKTNSLIAENLIYIAGDRVITDPLCKPFSMGRNLLCVYSKKHMYDDPELVDVKKRANTRSLKELVLLLRGGSKIIWIAPSGGRDRPDAVTGEWYPGTFDFAALDNMRRLVEHAGRPGHIYPLALLCYDIMPPPAQVEKEIGEKRVMSFHGVGVSVEPEINYNDVSLGCKNDEEAKSVYGQALYNSVNEQYNVLKAAIHGKQGSGASTPTTSLSQPWAS.

Residues 1–102 constitute a chloroplast transit peptide; that stretch reads MLVLSSSAPP…EIPVKKEDDN (102 aa). Residues 241-246 carry the HXXXXD motif motif; the sequence is HQSEAD.

This sequence belongs to the GPAT/DAPAT family.

It is found in the plastid. Its subcellular location is the chloroplast stroma. The catalysed reaction is sn-glycerol 3-phosphate + an acyl-CoA = a 1-acyl-sn-glycero-3-phosphate + CoA. It participates in phospholipid metabolism; CDP-diacylglycerol biosynthesis; CDP-diacylglycerol from sn-glycerol 3-phosphate: step 1/3. In terms of biological role, esterifies acyl-group from acyl-ACP to the sn-1 position of glycerol-3-phosphate. The enzyme from chilling-resistant plants discriminates against non-fluid palmitic acid and selects oleic acid whereas the enzyme from sensitive plants accepts both fatty acids. This is an oleate-selective acyltransferase. The polypeptide is Glycerol-3-phosphate acyltransferase, chloroplastic (GAT) (Spinacia oleracea (Spinach)).